The following is a 138-amino-acid chain: ATP synthase epsilon chain, chloroplastic (138 aa).

It belongs to the ATPase epsilon chain family. As to quaternary structure, F-type ATPases have 2 components, CF(1) - the catalytic core - and CF(0) - the membrane proton channel. CF(1) has five subunits: alpha(3), beta(3), gamma(1), delta(1), epsilon(1). CF(0) has three main subunits: a, b and c.

Its subcellular location is the plastid. It localises to the chloroplast thylakoid membrane. Its function is as follows. Produces ATP from ADP in the presence of a proton gradient across the membrane. The sequence is that of ATP synthase epsilon chain, chloroplastic from Huperzia lucidula (Shining clubmoss).